A 520-amino-acid chain; its full sequence is Nonsense-mediated mRNA decay factor SMG9 (520 aa).

Positions 1 to 143 (MSESGHSQPG…KGEKEGQRPT (143 aa)) are disordered. S2 is subject to N-acetylserine. Phosphoserine is present on residues S2, S4, S7, S32, and S53. Residues 36 to 53 (GRERDYIAPWERERRDGS) show a composition bias toward basic and acidic residues. A compositionally biased stretch (pro residues) spans 78 to 94 (QPPPPAAPAAPPAPAPL). Residues 109–121 (GPAATTSTSTPEG) show a composition bias toward low complexity. Residues 122-133 (TAPPPPAAPVPP) are compositionally biased toward pro residues. S451 is subject to Phosphoserine.

The protein belongs to the SMG9 family. In terms of assembly, self-associates to form homodimers and forms heterodimers with SMG8; these assembly forms may represent SMG1C intermediate forms. Component of the SMG1C complex composed of SMG1, SMG8 and SMG9. Self-associates to form homodimers and forms heterodimers with SMG8; these assembly forms may represent SMG1C intermediate forms. Interacts with DHX34; the interaction is RNA-independent. Post-translationally, phosphorylated by SMG1.

Involved in nonsense-mediated decay (NMD) of mRNAs containing premature stop codons. Is recruited by release factors to stalled ribosomes together with SMG1 and SMG8 (forming the SMG1C protein kinase complex) and, in the SMG1C complex, is required for the efficient association between SMG1 and SMG8. Plays a role in brain, heart, and eye development. The sequence is that of Nonsense-mediated mRNA decay factor SMG9 from Bos taurus (Bovine).